Reading from the N-terminus, the 400-residue chain is Subtilisin-like protease 7 (400 aa).

An N-terminal signal peptide occupies residues 1-20 (MGFITKAIPLALAAASVING). A propeptide spanning residues 21–119 (AEIMETRAGV…IERDARVQIN (99 aa)) is cleaved from the precursor. Residues 36–118 (KYIVVMNDGM…YIERDARVQI (83 aa)) form the Inhibitor I9 domain. A glycan (N-linked (GlcNAc...) asparagine) is linked at Asn-58. The 272-residue stretch at 129 to 400 (SWGLARVGSK…SKLINNGSGM (272 aa)) folds into the Peptidase S8 domain. Active-site charge relay system residues include Asp-161 and His-192. Asn-222 and Asn-252 each carry an N-linked (GlcNAc...) asparagine glycan. Ser-346 functions as the Charge relay system in the catalytic mechanism. An N-linked (GlcNAc...) asparagine glycan is attached at Asn-396.

The protein belongs to the peptidase S8 family.

It is found in the secreted. In terms of biological role, secreted subtilisin-like serine protease with keratinolytic activity that contributes to pathogenicity. The protein is Subtilisin-like protease 7 (SUB7) of Arthroderma benhamiae (Trichophyton mentagrophytes).